Here is a 662-residue protein sequence, read N- to C-terminus: tRNA 5-methylaminomethyl-2-thiouridine biosynthesis bifunctional protein MnmC (662 aa).

The tract at residues 1-245 (MKQNAIQPAN…KREMLTGEMA (245 aa)) is tRNA (mnm(5)s(2)U34)-methyltransferase. Residues 270 to 662 (IGGGIASALL…RKLLKGKAVK (393 aa)) form an FAD-dependent cmnm(5)s(2)U34 oxidoreductase region.

The protein in the N-terminal section; belongs to the methyltransferase superfamily. tRNA (mnm(5)s(2)U34)-methyltransferase family. This sequence in the C-terminal section; belongs to the DAO family. FAD serves as cofactor.

Its subcellular location is the cytoplasm. It carries out the reaction 5-aminomethyl-2-thiouridine(34) in tRNA + S-adenosyl-L-methionine = 5-methylaminomethyl-2-thiouridine(34) in tRNA + S-adenosyl-L-homocysteine + H(+). In terms of biological role, catalyzes the last two steps in the biosynthesis of 5-methylaminomethyl-2-thiouridine (mnm(5)s(2)U) at the wobble position (U34) in tRNA. Catalyzes the FAD-dependent demodification of cmnm(5)s(2)U34 to nm(5)s(2)U34, followed by the transfer of a methyl group from S-adenosyl-L-methionine to nm(5)s(2)U34, to form mnm(5)s(2)U34. This Klebsiella pneumoniae subsp. pneumoniae (strain ATCC 700721 / MGH 78578) protein is tRNA 5-methylaminomethyl-2-thiouridine biosynthesis bifunctional protein MnmC.